The primary structure comprises 511 residues: Cytochrome P450 monooxyhenase eriC (511 aa).

Residues 2-22 (VLADFISIPTVSIACLAVLGI) form a helical membrane-spanning segment. Residue Cys445 coordinates heme.

This sequence belongs to the cytochrome P450 family. Heme serves as cofactor.

The protein localises to the membrane. The enzyme catalyses erinacol + reduced [NADPH--hemoprotein reductase] + O2 = cyathadiol + oxidized [NADPH--hemoprotein reductase] + H2O + H(+). The protein operates within secondary metabolite biosynthesis. Cytochrome P450 monooxygenase; part of the gene cluster that mediates the biosynthesis of erinacines, cyathane-xylosides that show unique biological activities, including leishmanicidal activity, stimulating activity for nerve growth-factor synthesis, and agonistic activity toward the kappa opioid receptor. Within the pathway, eriC hydroxylates erinacol at C-15 of the seven-membered ring to yield cyathadiol. The first step of the erinacines biosynthesis pathway is catalyzed by the geranylgeranyl diphosphate (GGPP) synthase eriE via conversion of farnesyl pyrophosphate and isopentyl pyrophosphate into geranylgeranyl pyrophosphate (GGPP). GGPP is then substrate of the diterpene cyclase eriG for the production of cyatha-3,12-diene. The cytochrome P450 monooxygenase eriI then hydroxylates cyatha-3,12-diene at C-14 of the seven-membered ring to produce erinacol, which is further hydroxylated at C-15 by the cytochrome P450 monooxygenase eriC to yield cyathadiol. The cytochrome P450 monooxygenase eriA then catalyzes C-11 hydroxylation in the presence of the short chain dehydrogenase/reductase (SDR) eriH, which leads to the production of cyathatriol. The acetyltransferase eriL converts cyathatriol into 11-O-acetyl-cyathatriol. The SDR eriH catalyzes further oxidation of 11-O-acetyl-cyathatriol into 1-O-acetylcyathin A3. Finally, the glycosyl transferase eriJ tranfers xylose from UDP-xylose onto C-14 of 11-O-acetyl-cyathatriol to form eracine Q. EriJ is also able to convert 11-O-acetyl-cyathatriol to eracine Q2 by using UDP-D-glucose as cosubstrate, but at a lower rate. The polypeptide is Cytochrome P450 monooxyhenase eriC (Hericium erinaceus (Lion's mane mushroom)).